The following is a 206-amino-acid chain: dITP/XTP pyrophosphatase (206 aa).

Residue 7 to 12 (SCHGYK) coordinates substrate. The Proton acceptor role is filled by D70. D70 is a Mg(2+) binding site. Residues T71, 154 to 157 (FGYD), K177, and 182 to 183 (HR) each bind substrate.

This sequence belongs to the HAM1 NTPase family. As to quaternary structure, homodimer. Requires Mg(2+) as cofactor.

It carries out the reaction XTP + H2O = XMP + diphosphate + H(+). The catalysed reaction is dITP + H2O = dIMP + diphosphate + H(+). It catalyses the reaction ITP + H2O = IMP + diphosphate + H(+). Functionally, pyrophosphatase that catalyzes the hydrolysis of nucleoside triphosphates to their monophosphate derivatives, with a high preference for the non-canonical purine nucleotides XTP (xanthosine triphosphate), dITP (deoxyinosine triphosphate) and ITP. Seems to function as a house-cleaning enzyme that removes non-canonical purine nucleotides from the nucleotide pool, thus preventing their incorporation into DNA/RNA and avoiding chromosomal lesions. The sequence is that of dITP/XTP pyrophosphatase from Chlamydia caviae (strain ATCC VR-813 / DSM 19441 / 03DC25 / GPIC) (Chlamydophila caviae).